Reading from the N-terminus, the 423-residue chain is Cell adhesion molecule CEACAM16 (423 aa).

Residues 1–22 (MKMPLTWGSWFLLSAWILNAGA) form the signal peptide. Asn38 is a glycosylation site (N-linked (GlcNAc...) asparagine). Residues 77–96 (ETPGPAHTGREAVRPDGSLD) form a disordered region. Residues 84-95 (TGREAVRPDGSL) are compositionally biased toward basic and acidic residues. Ig-like C2-type domains are found at residues 134–219 (PPTV…LNLT) and 224–310 (PERV…ASVV). A disulfide bond links Cys155 and Cys202. N-linked (GlcNAc...) asparagine glycosylation occurs at Asn217. A disulfide bridge links Cys253 with Cys294.

Belongs to the immunoglobulin superfamily. CEA family. In terms of assembly, homooligomer; can for homodimers and homotetramers. Interacts with TECTA and TECTB.

The protein resides in the secreted. Its function is as follows. Required for proper hearing, plays a role in maintaining the integrity of the tectorial membrane. This is Cell adhesion molecule CEACAM16 from Rattus norvegicus (Rat).